Reading from the N-terminus, the 397-residue chain is MIDVELPNLMQVRAFIRVAELGSVSRATEVLFRAQSVVTRAIAELEARFAVPLFERHANGMRLTDYGECLLPRAQRVLAELDGVPSLLGTAQGEPLYLFQARRLQVFVKLCETRHMQTVARHFGLSQPAVSAALKVLEGGCGQPLFVRTSRGLQPTVASRDILFPIRRALNELRLLDSDLSAMQGTLRGVVHVGALPLGRSRILPDAILRFTAQHPQVRVVTNESPFDLLATELRVGDVDFVLGALRPHDYASDLVGEPLINEEMVVLARRGHPLLHTHLTLKGVHQARWVLPRAGSPARQLLDNCFAAAGLTAPWPVVESADLAVIRGLLVRSDMLAAVSAHQLAYEIASGELQRLPLALPGTARAIGLMQRSGCLQSPAAVALMACIRQVITEQA.

HTH lysR-type domains lie at 7-64 (PNLM…MRLT) and 99-156 (FQAR…LQPT). 2 DNA-binding regions (H-T-H motif) span residues 24–43 (VSRATEVLFRAQSVVTRAIA) and 116–135 (MQTVARHFGLSQPAVSAALK).

It belongs to the LysR transcriptional regulatory family.

Functionally, transcriptional regulator for the galBCD and galTAP operons, encoding genes of the gallate degradation pathway. In Pseudomonas putida (strain ATCC 47054 / DSM 6125 / CFBP 8728 / NCIMB 11950 / KT2440), this protein is HTH-type transcriptional regulator GalR (galR).